The chain runs to 133 residues: Acyl-CoA thioesterase YbgC (133 aa).

Asp-11 is a catalytic residue.

It belongs to the 4-hydroxybenzoyl-CoA thioesterase family. As to quaternary structure, homotetramer. May interact with CagA.

Its function is as follows. Thioesterase that may be involved in phospholipid metabolism. Displays acyl-CoA thioesterase activity with lauroyl-CoA (C12:0), myristoyl-CoA (C14:0), palmitoyl-CoA (C16:0), stearoyl-CoA (C18:0) and benzoyl-CoA, catalyzing the hydrolysis of the thioester bond. Has low activity with butyryl-CoA and octanoyl-CoA. The chain is Acyl-CoA thioesterase YbgC (ybgC) from Helicobacter pylori (strain ATCC 700392 / 26695) (Campylobacter pylori).